A 148-amino-acid polypeptide reads, in one-letter code: Cytochrome c-type biogenesis protein CcmE (148 aa).

Residues 1-7 (MKARNKR) lie on the Cytoplasmic side of the membrane. Residues 8–28 (LMLVGGGIALLVAAAALVLSA) form a helical; Signal-anchor for type II membrane protein membrane-spanning segment. Topologically, residues 29-148 (FQQNLVFFHT…AHKTATTVQQ (120 aa)) are periplasmic. The heme site is built by His123 and Tyr127.

It belongs to the CcmE/CycJ family.

It is found in the cell inner membrane. Functionally, heme chaperone required for the biogenesis of c-type cytochromes. Transiently binds heme delivered by CcmC and transfers the heme to apo-cytochromes in a process facilitated by CcmF and CcmH. The chain is Cytochrome c-type biogenesis protein CcmE from Azoarcus sp. (strain BH72).